The sequence spans 418 residues: Glutamyl-tRNA reductase (418 aa).

Substrate contacts are provided by residues 49–52 (TCNR), S109, 114–116 (EPQ), and Q120. C50 serves as the catalytic Nucleophile. 189-194 (GAGETI) is a binding site for NADP(+).

The protein belongs to the glutamyl-tRNA reductase family. Homodimer.

The catalysed reaction is (S)-4-amino-5-oxopentanoate + tRNA(Glu) + NADP(+) = L-glutamyl-tRNA(Glu) + NADPH + H(+). It functions in the pathway porphyrin-containing compound metabolism; protoporphyrin-IX biosynthesis; 5-aminolevulinate from L-glutamyl-tRNA(Glu): step 1/2. Its function is as follows. Catalyzes the NADPH-dependent reduction of glutamyl-tRNA(Glu) to glutamate 1-semialdehyde (GSA). The chain is Glutamyl-tRNA reductase from Salmonella heidelberg (strain SL476).